Consider the following 318-residue polypeptide: DNA repair nuclease/redox regulator APEX1 (318 aa).

Positions 1 to 33 (MPKRGKKGAVAEDGDELKTEPEAKKSKTAAKKN) are necessary for interaction with YBX1, binding to RNA, association together with NPM1 to rRNA, endoribonuclease activity on abasic RNA and localization in the nucleoli. Residues 1–60 (MPKRGKKGAVAEDGDELKTEPEAKKSKTAAKKNDKEAAGEGPALYEDPPDQKTSPSGKPA) are disordered. 2 positions are modified to N6-acetyllysine; by EP300: Lys-6 and Lys-7. Positions 8 to 13 (GAVAED) match the Nuclear localization signal (NLS) motif. Residues 16–38 (ELKTEPEAKKSKTAAKKNDKEAA) are compositionally biased toward basic and acidic residues. A necessary for interaction with NPM1 and for efficient rRNA binding region spans residues 23 to 33 (AKKSKTAAKKN). An N6-acetyllysine mark is found at Lys-27, Lys-31, Lys-32, and Lys-35. Ser-54 carries the post-translational modification Phosphoserine. The short motif at 64–80 (ICSWNVDGLRAWIKKKG) is the Nuclear export signal (NES) element. S-nitrosocysteine; alternate is present on Cys-65. Cys-65 and Cys-93 are joined by a disulfide. Asp-70 contributes to the Mg(2+) binding site. Position 93 is an S-nitrosocysteine; alternate (Cys-93). Glu-96 serves as a coordination point for Mg(2+). The active site involves Tyr-171. Lys-197 bears the N6-acetyllysine mark. Asp-210 and Asn-212 together coordinate Mg(2+). Asp-210 functions as the Proton donor/acceptor in the catalytic mechanism. A Phosphothreonine; by CDK5 modification is found at Thr-233. Residues 289-318 (HSLLPALCDSKIRSKALGSDHCPITLYLAL) form a mitochondrial targeting sequence (MTS) region. Mg(2+) is bound at residue Asp-308. Cys-310 is modified (S-nitrosocysteine).

Belongs to the DNA repair enzymes AP/ExoA family. In terms of assembly, monomer. Homodimer; disulfide-linked. Component of the SET complex, composed of at least APEX1, SET, ANP32A, HMGB2, NME1 and TREX1. Associates with the dimer XRCC5/XRCC6 in a DNA-dependent manner. Interacts with SIRT1; the interaction is increased in the context of genotoxic stress. Interacts with HDAC1, HDAC2 and HDAC3; the interactions are not dependent on the APEX1 acetylation status. Interacts with XRCC1; the interaction is induced by SIRT1 and increased with the APEX1 acetylated form. Interacts with NPM1 (via N-terminal domain); the interaction is RNA-dependent and decreases in hydrogen peroxide-damaged cells. Interacts (via N-terminus) with YBX1 (via C-terminus); the interaction is increased in presence of APEX1 acetylated at Lys-6 and Lys-7. Interacts with HNRNPL; the interaction is DNA-dependent. Interacts (via N-terminus) with KPNA1 and KPNA2. Interacts with TXN; the interaction stimulates the FOS/JUN AP-1 complex DNA-binding activity in a redox-dependent manner. Interacts with GZMA, KRT8, MDM2, POLB, PRDX6, PRPF19, RPLP0, TOMM20 and WDR77. Binds to CDK5. The cofactor is Mg(2+). It depends on Mn(2+) as a cofactor. Post-translationally, phosphorylated. Phosphorylation by kinase PKC or casein kinase CK2 results in enhanced redox activity that stimulates binding of the FOS/JUN AP-1 complex to its cognate binding site. AP-endodeoxyribonuclease activity is not affected by CK2-mediated phosphorylation. Phosphorylation of Thr-233 by CDK5 in response to MPP(+)/MPTP (1-methyl-4-phenylpyridinium) reduces AP-endodeoxyribonuclease activity resulting in accumulation of DNA damage and contributing to neuronal death. In terms of processing, acetylated on Lys-6 and Lys-7. Acetylation is increased by the transcriptional coactivator EP300 acetyltransferase, genotoxic agents like H(2)O(2) and methyl methanesulfonate (MMS). Acetylation increases its binding affinity to the negative calcium response element (nCaRE) DNA promoter. The acetylated form induces a stronger binding of YBX1 to the Y-box sequence in the MDR1 promoter than the unacetylated form. Deacetylated on lysines. Lys-6 and Lys-7 are deacetylated by SIRT1. Cleaved at Lys-31 by granzyme A to create the mitochondrial form; leading in reduction of binding to DNA, AP endodeoxyribonuclease activity, redox activation of transcription factors and to enhanced cell death. Cleaved by granzyme K; leading to intracellular ROS accumulation and enhanced cell death after oxidative stress. Post-translationally, cys-69 and Cys-93 are nitrosylated in response to nitric oxide (NO) and lead to the exposure of the nuclear export signal (NES). In terms of processing, ubiquitinated by MDM2; leading to translocation to the cytoplasm and proteasomal degradation.

The protein resides in the nucleus. It is found in the nucleolus. The protein localises to the nucleus speckle. It localises to the endoplasmic reticulum. Its subcellular location is the cytoplasm. The protein resides in the mitochondrion. The enzyme catalyses Exonucleolytic cleavage in the 3'- to 5'-direction to yield nucleoside 5'-phosphates.. Its activity is regulated as follows. NPM1 stimulates endodeoxyribonuclease activity on double-stranded DNA with AP sites, but inhibits endoribonuclease activity on single-stranded RNA containing AP sites. In terms of biological role, multifunctional protein that plays a central role in the cellular response to oxidative stress. The two major activities of APEX1 are DNA repair and redox regulation of transcriptional factors. Functions as an apurinic/apyrimidinic (AP) endodeoxyribonuclease in the DNA base excision repair (BER) pathway of DNA lesions induced by oxidative and alkylating agents. Initiates repair of AP sites in DNA by catalyzing hydrolytic incision of the phosphodiester backbone immediately adjacent to the damage, generating a single-strand break with 5'-deoxyribose phosphate and 3'-hydroxyl ends. Also incises at AP sites in the DNA strand of DNA/RNA hybrids, single-stranded DNA regions of R-loop structures, and single-stranded RNA molecules. Has 3'-5' exoribonuclease activity on mismatched deoxyribonucleotides at the 3' termini of nicked or gapped DNA molecules during short-patch BER. Possesses DNA 3' phosphodiesterase activity capable of removing lesions (such as phosphoglycolate) blocking the 3' side of DNA strand breaks. May also play a role in the epigenetic regulation of gene expression by participating in DNA demethylation. Acts as a loading factor for POLB onto non-incised AP sites in DNA and stimulates the 5'-terminal deoxyribose 5'-phosphate (dRp) excision activity of POLB. Plays a role in the protection from granzyme-mediated cellular repair leading to cell death. Also involved in the DNA cleavage step of class switch recombination (CSR). On the other hand, APEX1 also exerts reversible nuclear redox activity to regulate DNA binding affinity and transcriptional activity of transcriptional factors by controlling the redox status of their DNA-binding domain, such as the FOS/JUN AP-1 complex after exposure to IR. Involved in calcium-dependent down-regulation of parathyroid hormone (PTH) expression by binding to negative calcium response elements (nCaREs). Together with HNRNPL or the dimer XRCC5/XRCC6, associates with nCaRE, acting as an activator of transcriptional repression. Stimulates the YBX1-mediated MDR1 promoter activity, when acetylated at Lys-6 and Lys-7, leading to drug resistance. Also acts as an endoribonuclease involved in the control of single-stranded RNA metabolism. Plays a role in regulating MYC mRNA turnover by preferentially cleaving in between UA and CA dinucleotides of the MYC coding region determinant (CRD). In association with NMD1, plays a role in the rRNA quality control process during cell cycle progression. Associates, together with YBX1, on the MDR1 promoter. Together with NPM1, associates with rRNA. Binds DNA and RNA. This chain is DNA repair nuclease/redox regulator APEX1 (APEX1), found in Gorilla gorilla gorilla (Western lowland gorilla).